The following is a 368-amino-acid chain: Quinolinate synthase (368 aa).

His46 and Ser63 together coordinate iminosuccinate. Cys110 contacts [4Fe-4S] cluster. Iminosuccinate is bound by residues 141 to 143 (YVN) and Ser162. Cys230 serves as a coordination point for [4Fe-4S] cluster. Iminosuccinate is bound by residues 256–258 (HPE) and Thr273. Residue Cys320 coordinates [4Fe-4S] cluster.

Belongs to the quinolinate synthase family. Type 3 subfamily. As to quaternary structure, homotrimer. [4Fe-4S] cluster is required as a cofactor.

The protein localises to the cytoplasm. It catalyses the reaction iminosuccinate + dihydroxyacetone phosphate = quinolinate + phosphate + 2 H2O + H(+). Its pathway is cofactor biosynthesis; NAD(+) biosynthesis; quinolinate from iminoaspartate: step 1/1. In terms of biological role, catalyzes the condensation of iminoaspartate with dihydroxyacetone phosphate to form quinolinate. The polypeptide is Quinolinate synthase (Bacillus subtilis (strain 168)).